The sequence spans 65 residues: Disintegrin CC5 (65 aa).

The 65-residue stretch at 1–65 (MNSAHPCCDP…SDCPRNRYKS (65 aa)) folds into the Disintegrin domain. 4 cysteine pairs are disulfide-bonded: Cys-7/Cys-30, Cys-21/Cys-27, Cys-26/Cys-51, and Cys-39/Cys-58. Residues 43-45 (RGD) carry the Cell attachment site motif.

Belongs to the disintegrin family. Dimeric disintegrin subfamily. As to quaternary structure, homodimer; disulfide-linked. Expressed by the venom gland.

Its subcellular location is the secreted. Functionally, binds and inhibits integrins alpha-IIb/beta-3 (ITGA2B/ITGB3), alpha-V/beta-3 (ITGAV/ITGB3) and alpha-5/beta-1 (ITGA5/ITGB1). This is Disintegrin CC5 from Cerastes cerastes (Horned desert viper).